A 450-amino-acid polypeptide reads, in one-letter code: Glucose-6-phosphate isomerase (450 aa).

Residue E291 is the Proton donor of the active site. Catalysis depends on residues H312 and K426.

Belongs to the GPI family.

Its subcellular location is the cytoplasm. It catalyses the reaction alpha-D-glucose 6-phosphate = beta-D-fructose 6-phosphate. It functions in the pathway carbohydrate biosynthesis; gluconeogenesis. The protein operates within carbohydrate degradation; glycolysis; D-glyceraldehyde 3-phosphate and glycerone phosphate from D-glucose: step 2/4. Catalyzes the reversible isomerization of glucose-6-phosphate to fructose-6-phosphate. The protein is Glucose-6-phosphate isomerase of Clostridium novyi (strain NT).